Consider the following 1172-residue polypeptide: DNA-directed RNA polymerases IV and V subunit 2 (1172 aa).

Asp-786 is a Mg(2+) binding site. Residues Cys-1108, Cys-1111, Cys-1133, and Cys-1136 each contribute to the Zn(2+) site. The segment at 1108–1136 (CRKCKTYANVIERTPSSGRKIRGPYCRVC) adopts a C4-type zinc-finger fold.

It belongs to the RNA polymerase beta chain family. Component of the RNA polymerase IV and V complexes. Interacts with SSH1, NRPD1 and NRPE1. As to expression, mostly expressed in seedlings, flowers and roots, present ubiquitously, except in sperm cells.

Its subcellular location is the nucleus. It catalyses the reaction RNA(n) + a ribonucleoside 5'-triphosphate = RNA(n+1) + diphosphate. Its function is as follows. DNA-dependent RNA polymerase catalyzes the transcription of DNA into RNA using the four ribonucleoside triphosphates as substrates. Second largest component of RNA polymerases IV and V which mediate short-interfering RNAs (siRNA) accumulation and subsequent RNA-directed DNA methylation-dependent (RdDM) transcriptional gene silencing (TGS) of endogenous repeated sequences, including transposable elements. Proposed to contribute to the polymerase catalytic activity and forms the polymerase active center together with the largest subunit. Also required for full erasure of methylation when the RNA trigger is withdrawn. Required for intercellular RNA interference (RNAi) leading to systemic post-transcriptional gene silencing. Involved in the maintenance of post-transcriptional RNA silencing. During interphase, mediates siRNA-independent heterochromatin association and methylation into chromocenters and condensation and cytosine methylation at pericentromeric major repeats. Required for complete maintenance of the 35S promoter homology-dependent TGS in transgenic plants and for the initial establishment of DNA methylation. This is DNA-directed RNA polymerases IV and V subunit 2 (NRPD2) from Arabidopsis thaliana (Mouse-ear cress).